Consider the following 2715-residue polypeptide: Chromodomain-helicase-DNA-binding protein 6 (2715 aa).

Residues 1–11 (MKMKIQKKEKQ) show a composition bias toward basic and acidic residues. 2 disordered regions span residues 1–30 (MKMKIQKKEKQLSNLKVLNHSPMSDASVNF) and 66–244 (EEAA…QVKR). The interval 1 to 747 (MKMKIQKKEK…MMELRKCCNH (747 aa)) is required for DNA-dependent ATPase activity. Residues 12-27 (LSNLKVLNHSPMSDAS) show a composition bias toward polar residues. Residues 123-172 (EPKEPKEPRKAKEPKKAKEHKEPKQKDGAKKARKPREASGTKEAKEKRSC) show a composition bias toward basic and acidic residues. Chromo domains follow at residues 292 to 343 (NIIE…KDPR) and 375 to 439 (VEVD…KHVE). One can recognise a Helicase ATP-binding domain in the interval 473 to 647 (LFNWYNRKNC…FSLLNFLEPS (175 aa)). 486–493 (DEMGLGKT) is an ATP binding site. The DEAH box motif lies at 598–601 (DEAH). The Helicase C-terminal domain occupies 787–956 (LIDKLLPKLI…LSKMEVEDLL (170 aa)). Residues 1318–1390 (KSLSAEQGVT…SDPDKSPWPV (73 aa)) are disordered. Residues 1321–1330 (SAEQGVTDGT) show a composition bias toward polar residues. 2 stretches are compositionally biased toward basic and acidic residues: residues 1333 to 1351 (IPERGNTDKEDNAEDKVDG) and 1367 to 1376 (FSEKKDDSRA). Positions 1449–1503 (RWTRREQADFYRTVSSFGVVYDQEKKTFDWTQFRIISRLDKKSDESLEQYFYSFV) constitute a Myb-like domain. Over residues 2027-2038 (FENKDDYDRDGN) the composition is skewed to basic and acidic residues. Disordered stretches follow at residues 2027 to 2063 (FENKDDYDRDGNCHSQDYPGKYSEEESKSSTSGITGD), 2116 to 2148 (SQQYEPSGTLPTPVLTSSAGSRTSLSEPEAAEH), 2321 to 2351 (QATLSTTHPEGPGPATSAPEPATAASSQAEK), 2373 to 2422 (PGFG…FLPE), 2547 to 2602 (TSTA…PAIT), and 2648 to 2715 (VGLE…NDTN). The span at 2116 to 2141 (SQQYEPSGTLPTPVLTSSAGSRTSLS) shows a compositional bias: polar residues. The segment covering 2329–2346 (PEGPGPATSAPEPATAAS) has biased composition (low complexity). Residues 2547–2560 (TSTAPASLSSTTKS) are compositionally biased toward low complexity. Composition is skewed to basic and acidic residues over residues 2567 to 2588 (KTAEDKPSSHDVKTDTLAEDKP) and 2706 to 2715 (ALKDSNNDTN).

Belongs to the SNF2/RAD54 helicase family. In terms of assembly, interacts with NFE2L2; involved in activation of the transcription. (Microbial infection) Interacts with the influenza A polymerase complex composed fo PB1, PB2 and PA. As to quaternary structure, (Microbial infection) Interacts (via N-terminus) with human papillomavirus protein E8^E2C (via C-terminus); this interaction induces transcriptional repression of the viral genome. In terms of tissue distribution, widely expressed.

Its subcellular location is the nucleus. It is found in the nucleoplasm. It carries out the reaction ATP + H2O = ADP + phosphate + H(+). In terms of biological role, ATP-dependent chromatin-remodeling factor. Regulates transcription by disrupting nucleosomes in a largely non-sliding manner which strongly increases the accessibility of chromatin; nucleosome disruption requires ATP. Activates transcription of specific genes in response to oxidative stress through interaction with NFE2L2. (Microbial infection) Acts as a transcriptional repressor of different viruses including influenza virus or papillomavirus. During influenza virus infection, the viral polymerase complex localizes CHD6 to inactive chromatin where it gets degraded in a proteasome independent-manner. In Homo sapiens (Human), this protein is Chromodomain-helicase-DNA-binding protein 6 (CHD6).